The primary structure comprises 361 residues: MRVDLFDFDLPDERIALRPAEPRDSARLLVVDPDAESALSDHHVCDLPSFLRAGDALVFNDTKVIPAQLEGIRHRDGAGGQQVSATLHMRIGPSRWKAFAKPGKRIKEGDRIAFGHSGESCMIGSLDATVEEKGEAGEVTLAFDLSGPVLDEAIAAVGHIPLPPYIAAKRPEDERDRADYQTIYAREEGAVAAPTAGLHFTPALFEALDKAGIERHFVTLHVGAGTFLPVKADDTDDHKMHLESGYVSGEIAAGLNAVKARGGRIVCVGTTSLRLIESAAGESGEIKPWAGATGIFITPGYRFKAVDMLMTNFHLPRSTLFMLVSAFSGFETMHAAYKHAISTGYRFYSYGDASLLFRKDK.

It belongs to the QueA family. Monomer.

The protein resides in the cytoplasm. The catalysed reaction is 7-aminomethyl-7-carbaguanosine(34) in tRNA + S-adenosyl-L-methionine = epoxyqueuosine(34) in tRNA + adenine + L-methionine + 2 H(+). It functions in the pathway tRNA modification; tRNA-queuosine biosynthesis. Transfers and isomerizes the ribose moiety from AdoMet to the 7-aminomethyl group of 7-deazaguanine (preQ1-tRNA) to give epoxyqueuosine (oQ-tRNA). This is S-adenosylmethionine:tRNA ribosyltransferase-isomerase from Rhizobium etli (strain ATCC 51251 / DSM 11541 / JCM 21823 / NBRC 15573 / CFN 42).